A 116-amino-acid chain; its full sequence is NADH-ubiquinone oxidoreductase chain 3 (116 aa).

The next 3 membrane-spanning stretches (helical) occupy residues 3–23, 56–76, and 84–104; these read LVTT…TISF, FFLI…LLPL, and APTL…LGLI.

This sequence belongs to the complex I subunit 3 family.

The protein localises to the mitochondrion membrane. It carries out the reaction a ubiquinone + NADH + 5 H(+)(in) = a ubiquinol + NAD(+) + 4 H(+)(out). Core subunit of the mitochondrial membrane respiratory chain NADH dehydrogenase (Complex I) that is believed to belong to the minimal assembly required for catalysis. Complex I functions in the transfer of electrons from NADH to the respiratory chain. The immediate electron acceptor for the enzyme is believed to be ubiquinone. This chain is NADH-ubiquinone oxidoreductase chain 3 (MT-ND3), found in Oncorhynchus nerka (Sockeye salmon).